A 365-amino-acid polypeptide reads, in one-letter code: uncharacterized protein (365 aa).

In terms of domain architecture, Radical SAM core spans 45-289 (FSIGKSLTII…LKEVKKSNPK (245 aa)). 3 residues coordinate [4Fe-4S] cluster: Cys60, Cys68, and Cys71.

The cofactor is [4Fe-4S] cluster.

This is an uncharacterized protein from Methanocaldococcus jannaschii (strain ATCC 43067 / DSM 2661 / JAL-1 / JCM 10045 / NBRC 100440) (Methanococcus jannaschii).